A 136-amino-acid polypeptide reads, in one-letter code: Large ribosomal subunit protein uL22 (136 aa).

This sequence belongs to the universal ribosomal protein uL22 family. Part of the 50S ribosomal subunit.

In terms of biological role, this protein binds specifically to 23S rRNA; its binding is stimulated by other ribosomal proteins, e.g. L4, L17, and L20. It is important during the early stages of 50S assembly. It makes multiple contacts with different domains of the 23S rRNA in the assembled 50S subunit and ribosome. Its function is as follows. The globular domain of the protein is located near the polypeptide exit tunnel on the outside of the subunit, while an extended beta-hairpin is found that lines the wall of the exit tunnel in the center of the 70S ribosome. The protein is Large ribosomal subunit protein uL22 of Leifsonia xyli subsp. xyli (strain CTCB07).